The chain runs to 546 residues: Flavin-dependent oxygenase ucdF (546 aa).

The FAD-binding PCMH-type domain occupies 81 to 263 (QGRIPYYAVM…VNTTIRTFPD (183 aa)).

It belongs to the oxygen-dependent FAD-linked oxidoreductase family.

Nonribosomal peptide synthetase that mediates the biosynthesis of usterphenyllins and uscandidusins, p-terphenyl derivatives. The function of ucdF within the pathway still remains to be determined. UcdE further prenylates position C-14 of ring C of usterphenyllin B to form usterphenyllin A. The pathway begin with the biosynthesis of 4-hydroxyphenylpyruvate (HPPA) from L-tyrosine, possibly by the aminotransferase ucdG. The nonribosomal peptide synthetase ucdA then condenses two HPPA units to produce atromentin. The key step in this pathway is the reduction and dehydration of atromentin to form a terphenyl triol intermediate, performed by the NAD-dependent dehydrogenase ucdB. Further O-methylation by the methyltransferase ucdC forms terphenyllin carrying two methoxy moieties at C-9 and C-12, and subsequent dihydroxylation at C-3 of ring A and C-15 of ring C by the flavin-dependent oxygenase ucdD leads to 3,15-dihydroxyterphenyllin. Prenylation by ucdE at position C-5 of ring A forms usterphenyllin B, and is followed by a second prenylation at position C-14 of ring C to form usterphenyllin A. The following furan ring formation that leads to uscandidusins A and B was proven to be an unexpected spontaneous non-enzymatic reaction. This chain is Flavin-dependent oxygenase ucdF, found in Aspergillus ustus.